Consider the following 288-residue polypeptide: MLLLDGKATAAAIRAELKEEVAAGLAAAGRAPGLAVILVGEDPASQVYVRNKERGCEEAGIRSEAFRLPADTTQETLEVLIDELNGRADIDGILLQLPLPKGLNSQRCLERISPRKDVDGFHPENMGRLALGLPGFRPCTPAGVMTLLERYDLSPSGKKAVVVGRSNIVGKPLALMLGAPGKYANATVTVCHSGTPDLAEECRQADFLFVAAGRPCLVTSDMVKPGAVVVDVGIHRTDEGLVGDCKYDDISCIAAAMTPVPGGVGPMTIAQLLINTVISWKGRTGIAG.

Residues 164-166 (GRS), Ser193, and Ile234 contribute to the NADP(+) site.

Belongs to the tetrahydrofolate dehydrogenase/cyclohydrolase family. Homodimer.

The enzyme catalyses (6R)-5,10-methylene-5,6,7,8-tetrahydrofolate + NADP(+) = (6R)-5,10-methenyltetrahydrofolate + NADPH. It catalyses the reaction (6R)-5,10-methenyltetrahydrofolate + H2O = (6R)-10-formyltetrahydrofolate + H(+). It functions in the pathway one-carbon metabolism; tetrahydrofolate interconversion. Functionally, catalyzes the oxidation of 5,10-methylenetetrahydrofolate to 5,10-methenyltetrahydrofolate and then the hydrolysis of 5,10-methenyltetrahydrofolate to 10-formyltetrahydrofolate. The polypeptide is Bifunctional protein FolD (Nitratidesulfovibrio vulgaris (strain DSM 19637 / Miyazaki F) (Desulfovibrio vulgaris)).